Consider the following 469-residue polypeptide: Adenosylhomocysteinase (469 aa).

Substrate contacts are provided by Thr60, Asp135, and Glu195. 196 to 198 serves as a coordination point for NAD(+); sequence TTT. Positions 225 and 229 each coordinate substrate. Residues Asn230, 259 to 264, Glu282, Asn317, 338 to 340, and Asn383 each bind NAD(+); these read GYGDVG and IGH.

Belongs to the adenosylhomocysteinase family. It depends on NAD(+) as a cofactor.

Its subcellular location is the cytoplasm. The catalysed reaction is S-adenosyl-L-homocysteine + H2O = L-homocysteine + adenosine. It participates in amino-acid biosynthesis; L-homocysteine biosynthesis; L-homocysteine from S-adenosyl-L-homocysteine: step 1/1. Functionally, may play a key role in the regulation of the intracellular concentration of adenosylhomocysteine. This chain is Adenosylhomocysteinase, found in Maricaulis maris (strain MCS10) (Caulobacter maris).